We begin with the raw amino-acid sequence, 115 residues long: Large ribosomal subunit protein bL19 (115 aa).

Belongs to the bacterial ribosomal protein bL19 family.

In terms of biological role, this protein is located at the 30S-50S ribosomal subunit interface and may play a role in the structure and function of the aminoacyl-tRNA binding site. In Bacillus pumilus (strain SAFR-032), this protein is Large ribosomal subunit protein bL19.